The sequence spans 212 residues: Cyclin-dependent kinase inhibitor 3 (212 aa).

Residues 1 to 12 (MKPPSSIQTSEF) are compositionally biased toward polar residues. A disordered region spans residues 1–20 (MKPPSSIQTSEFDSSDEEPI). The tract at residues 1–34 (MKPPSSIQTSEFDSSDEEPIEDEQTPIHISWLSL) is interaction with CDK2. Positions 33–201 (SLSRVNCSQF…FRDKLAAHLS (169 aa)) constitute a Tyrosine-protein phosphatase domain. The active-site Phosphocysteine intermediate is the Cys-140.

Belongs to the protein-tyrosine phosphatase family. As to quaternary structure, interacts with cyclin-dependent kinases such as CDK1, CDK2 and CDK3. Does not interact with CDK4. Interacts (via C-terminus) with phosphorylated CDK2 (via C-terminal helix). Interacts with MS4A3 (via C-terminus); the interaction enhances CDKN3 enzymatic activity.

It is found in the cytoplasm. Its subcellular location is the perinuclear region. It catalyses the reaction O-phospho-L-tyrosyl-[protein] + H2O = L-tyrosyl-[protein] + phosphate. The enzyme catalyses O-phospho-L-threonyl-[protein] + H2O = L-threonyl-[protein] + phosphate. It carries out the reaction O-phospho-L-seryl-[protein] + H2O = L-seryl-[protein] + phosphate. In terms of biological role, may play a role in cell cycle regulation. Dual specificity CC phosphatase active toward substrates containing either phosphotyrosine or phosphoserine residues. Dephosphorylates CDK2 at 'Thr-160' in a cyclin-dependent manner. This chain is Cyclin-dependent kinase inhibitor 3, found in Homo sapiens (Human).